Reading from the N-terminus, the 258-residue chain is Maintenance of carboxysome distribution protein A (258 aa).

Gly-11, Gly-12, Gln-13, Gly-14, Lys-15, Thr-16, Thr-17, Gln-40, Glu-147, Lys-151, Phe-182, Arg-183, Leu-216, Glu-217, Ser-218, and Tyr-221 together coordinate ATP. Thr-16 is a binding site for Mg(2+).

Belongs to the ParA family. McdA subfamily. As to quaternary structure, homodimerizes in the presence of ATP, making extra nucleotide contacts than with ADP or AMP-PNP. Each subunit binds 1 ATP molecule; Glu-147, Lys-151 and Arg-183 cross the dimer interface to contact ATP in the other subunit, while Phe-182, Arg-183 and Tyr-221 stack with the adenine base in their own subunit. Forms a complex with McdB.

It is found in the cytoplasm. The protein resides in the nucleoid. The enzyme catalyses ATP + H2O = ADP + phosphate + H(+). Functionally, mcdA and McdB together mediate carboxysome (Cb) spacing, size, ultrastructure and probably inheritance in the cell, together they prevent Cb aggregation. McdA is an ATPase that forms dynamic gradients on the nucleoid in response to adapter protein McdB, which associates with carboxysomes. The interplay between McdA gradients on the nucleoid and McdB-bound carboxysomes result in the equal spacing of Cbs along the cell length. Binds DNA saturably and strongly in the presence of Mg(2+)ATP; without ATP, DNA-binding is very poor (tested with a mutant that should not be able to hydrolyze ATP, Asp-38-Ala). Decreasing the NaCl concentration increases DNA binding. Incorrect positioning (aggregation) of carboxysomes results in reduced CO(2) fixation by encapsulated ribulose-1,5-bisphosphate carboxylase (RuBisCO, cbbL/cbbS), which leads to slower growth. The chain is Maintenance of carboxysome distribution protein A from Gloeothece citriformis (strain PCC 7424) (Cyanothece sp. (strain PCC 7424)).